Here is a 227-residue protein sequence, read N- to C-terminus: Urease subunit gamma/beta (227 aa).

Positions 1-101 (MRLTPTERDR…LAVVTDPIGG (101 aa)) are urease gamma. A urease beta region spans residues 102-227 (GLGDQAPGAL…ACGYLGVEQR (126 aa)).

In the N-terminal section; belongs to the urease gamma subunit family. This sequence in the C-terminal section; belongs to the urease beta subunit family. Heterohexamer of 3 UreC (alpha) and 3 UreAB (gamma/beta) subunits.

The protein localises to the cytoplasm. It catalyses the reaction urea + 2 H2O + H(+) = hydrogencarbonate + 2 NH4(+). Its pathway is nitrogen metabolism; urea degradation; CO(2) and NH(3) from urea (urease route): step 1/1. This is Urease subunit gamma/beta from Streptomyces avermitilis (strain ATCC 31267 / DSM 46492 / JCM 5070 / NBRC 14893 / NCIMB 12804 / NRRL 8165 / MA-4680).